The sequence spans 127 residues: Small ribosomal subunit protein uS11 (127 aa).

The protein belongs to the universal ribosomal protein uS11 family. As to quaternary structure, part of the 30S ribosomal subunit. Interacts with proteins S7 and S18. Binds to IF-3.

In terms of biological role, located on the platform of the 30S subunit, it bridges several disparate RNA helices of the 16S rRNA. Forms part of the Shine-Dalgarno cleft in the 70S ribosome. This Rickettsia felis (strain ATCC VR-1525 / URRWXCal2) (Rickettsia azadi) protein is Small ribosomal subunit protein uS11.